A 132-amino-acid chain; its full sequence is tRNA (cytidine(56)-2'-O)-methyltransferase (132 aa).

S-adenosyl-L-methionine is bound by residues Leu-35, 65 to 69 (GSEKV), and 83 to 90 (IGNQPHSE).

This sequence belongs to the aTrm56 family. Homodimer.

The protein localises to the cytoplasm. It carries out the reaction cytidine(56) in tRNA + S-adenosyl-L-methionine = 2'-O-methylcytidine(56) in tRNA + S-adenosyl-L-homocysteine + H(+). Its function is as follows. Specifically catalyzes the AdoMet-dependent 2'-O-ribose methylation of cytidine at position 56 in tRNAs. In Sulfolobus acidocaldarius (strain ATCC 33909 / DSM 639 / JCM 8929 / NBRC 15157 / NCIMB 11770), this protein is tRNA (cytidine(56)-2'-O)-methyltransferase.